The primary structure comprises 135 residues: Putative hydrolase EbsB (135 aa).

In terms of domain architecture, RNase H type-1 spans 1–128 (MLRIYVDAAT…ADMLARQALQ (128 aa)). Asp-7, Glu-45, Asp-71, and Asp-120 together coordinate Mg(2+).

It belongs to the RNase H family. EbsB subfamily. It depends on Mg(2+) as a cofactor.

It localises to the secreted. The protein localises to the cell wall. Its function is as follows. Seems to play some role in the cell surface expression of a chromosomally encoded receptor, named enterococcal binding substance (EBS), that mediates mating aggregate formation. Might interfere with the synthesis or assembly of EBS and function as a cell wall hydrolase. This Enterococcus faecalis (strain ATCC 700802 / V583) protein is Putative hydrolase EbsB.